A 291-amino-acid chain; its full sequence is Ribosomal large subunit pseudouridine synthase B (291 aa).

Positions 3–75 (EKLQKVLARA…ICRVLAYYKP (73 aa)) constitute an S4 RNA-binding domain. Residue aspartate 110 is the Nucleophile of the active site. The disordered stretch occupies residues 256-291 (VEKDRRRMKANQIRRAVKRHSQVSGGRRSGGRNNNG).

It belongs to the pseudouridine synthase RsuA family.

It catalyses the reaction uridine(2605) in 23S rRNA = pseudouridine(2605) in 23S rRNA. Its function is as follows. Responsible for synthesis of pseudouridine from uracil-2605 in 23S ribosomal RNA. The sequence is that of Ribosomal large subunit pseudouridine synthase B (rluB) from Escherichia coli (strain K12).